Here is a 506-residue protein sequence, read N- to C-terminus: Anaerobic nitric oxide reductase transcription regulator NorR (506 aa).

Residue Asp-57 is modified to 4-aspartylphosphate. The 230-residue stretch at 187-416 folds into the Sigma-54 factor interaction domain; sequence MIGLSPAMTQ…LEHAIHRAVV (230 aa). ATP contacts are provided by residues 215–222 and 278–287; these read GETGTGKE and ADNGTLFLDE. Positions 481 to 500 form a DNA-binding region, H-T-H motif; sequence WAASARALETDVANLHRLAK.

It participates in nitrogen metabolism; nitric oxide reduction. Functionally, required for the expression of anaerobic nitric oxide (NO) reductase, acts as a transcriptional activator for at least the norVW operon. Activation also requires sigma-54. This chain is Anaerobic nitric oxide reductase transcription regulator NorR, found in Salmonella paratyphi A (strain ATCC 9150 / SARB42).